A 293-amino-acid chain; its full sequence is MDSKLRSLLSDHSRYVESFRLFLQNSTEHQCMQHFIESKLPNIISSIGNDKPVIDVLGVGSGSGEIDLQMIAKIQARWPGVPINNQIVEPSAEQIFGYKERVAKAPNLENVTFSWHRQTSSEFESQVNEDKQMRKFDFIHMIQMLYYVKDVLGTLKFFKSCLAPSGKLLIILVSGNSGWATLWKKYGQRLPLNDLCLYITAGDIAEMLSSMGARFQSHELQSDMDITECFIEGDRDGELLLDFLTETCDFKRNAPADLRDQIICDLKSPGCSTTKDGKVIFNNNLSVIVVEAD.

Glu-28 is a substrate binding site. 5 residues coordinate S-adenosyl-L-methionine: Gly-60, Glu-89, Gln-94, Ser-120, and Ile-142. A substrate-binding site is contributed by Asn-283.

Belongs to the class I-like SAM-binding methyltransferase superfamily. HNMT family. As to quaternary structure, monomer.

It is found in the cytoplasm. The catalysed reaction is histamine + S-adenosyl-L-methionine = N(tau)-methylhistamine + S-adenosyl-L-homocysteine + H(+). Its function is as follows. Inactivates histamine by N-methylation. Plays an important role in degrading histamine and in regulating the airway response to histamine. The protein is Histamine N-methyltransferase A (hnmt-a) of Xenopus laevis (African clawed frog).